Consider the following 181-residue polypeptide: Coatomer subunit zeta-3 (181 aa).

The protein belongs to the adaptor complexes small subunit family. As to quaternary structure, oligomeric complex that consists of at least the alpha, beta, beta', gamma, delta, epsilon and zeta subunits.

Its subcellular location is the cytoplasm. It is found in the golgi apparatus membrane. It localises to the cytoplasmic vesicle. The protein resides in the COPI-coated vesicle membrane. Its function is as follows. The coatomer is a cytosolic protein complex that binds to dilysine motifs and reversibly associates with Golgi non-clathrin-coated vesicles, which further mediate biosynthetic protein transport from the ER, via the Golgi up to the trans Golgi network. Coatomer complex is required for budding from Golgi membranes, and is essential for the retrograde Golgi-to-ER transport of dilysine-tagged proteins. The zeta subunit may be involved in regulating the coat assembly and, hence, the rate of biosynthetic protein transport due to its association-dissociation properties with the coatomer complex. This chain is Coatomer subunit zeta-3, found in Arabidopsis thaliana (Mouse-ear cress).